We begin with the raw amino-acid sequence, 237 residues long: Sugar fermentation stimulation protein homolog (237 aa).

Belongs to the SfsA family.

This Pseudomonas savastanoi pv. phaseolicola (strain 1448A / Race 6) (Pseudomonas syringae pv. phaseolicola (strain 1448A / Race 6)) protein is Sugar fermentation stimulation protein homolog.